We begin with the raw amino-acid sequence, 468 residues long: Dimethylamine methyltransferase MtbB1 (468 aa).

Position 356 (Pyl356) is a non-standard amino acid, pyrrolysine.

This sequence belongs to the dimethylamine methyltransferase family.

It carries out the reaction Co(I)-[dimethylamine-specific corrinoid protein] + dimethylamine + H(+) = methyl-Co(III)-[dimethylamine-specific corrinoid protein] + methylamine. The protein operates within one-carbon metabolism; methanogenesis from dimethylamine. In terms of biological role, catalyzes the transfer of a methyl group from dimethylamine to the corrinoid cofactor of MtbC. The sequence is that of Dimethylamine methyltransferase MtbB1 (mtbB1) from Methanosarcina mazei (strain ATCC BAA-159 / DSM 3647 / Goe1 / Go1 / JCM 11833 / OCM 88) (Methanosarcina frisia).